A 530-amino-acid chain; its full sequence is 4,4'-diapolycopene aldehyde oxidase (530 aa).

Active-site residues include Glu-234 and Cys-268.

This sequence belongs to the aldehyde dehydrogenase family.

It catalyses the reaction all-trans-4,4'-diapolycopen-4-al + A + H2O = all-trans-4,4'-diapolycopen-4-oate + AH2 + H(+). It carries out the reaction all-trans-4,4'-diapolycopene-4,4'-dial + 2 A + 2 H2O = all-trans-4,4'-diapolycopene-4,4'-dioate + 2 AH2 + 2 H(+). The protein operates within carotenoid biosynthesis. Functionally, involved in the biosynthesis of C30 carotenoids. Catalyzes the oxidation of 4,4'-diapolycopene-4,4'-dial to yield 4,4'-diapolycopene-4,4'-dioic acid. Also able to catalyze the oxidation of 4,4'-diapolycopen-4-al to yield 4,4'-diapolycopen-4-oic acid. This chain is 4,4'-diapolycopene aldehyde oxidase, found in Methylomonas sp.